A 140-amino-acid polypeptide reads, in one-letter code: Large ribosomal subunit protein uL16 (140 aa).

It belongs to the universal ribosomal protein uL16 family. As to quaternary structure, part of the 50S ribosomal subunit.

Its function is as follows. Binds 23S rRNA and is also seen to make contacts with the A and possibly P site tRNAs. The chain is Large ribosomal subunit protein uL16 from Amoebophilus asiaticus (strain 5a2).